The sequence spans 281 residues: Pantothenate synthetase (281 aa).

Residue 31–38 coordinates ATP; it reads MGNLHAGH. Catalysis depends on histidine 38, which acts as the Proton donor. Residue glutamine 62 participates in (R)-pantoate binding. Beta-alanine is bound at residue glutamine 62. 150 to 153 is a binding site for ATP; that stretch reads GKKD. Position 156 (glutamine 156) interacts with (R)-pantoate. Residues valine 179 and 187 to 190 contribute to the ATP site; that span reads MSSR.

This sequence belongs to the pantothenate synthetase family. In terms of assembly, homodimer.

The protein resides in the cytoplasm. The catalysed reaction is (R)-pantoate + beta-alanine + ATP = (R)-pantothenate + AMP + diphosphate + H(+). It functions in the pathway cofactor biosynthesis; (R)-pantothenate biosynthesis; (R)-pantothenate from (R)-pantoate and beta-alanine: step 1/1. Its function is as follows. Catalyzes the condensation of pantoate with beta-alanine in an ATP-dependent reaction via a pantoyl-adenylate intermediate. This Xylella fastidiosa (strain M23) protein is Pantothenate synthetase.